Here is a 396-residue protein sequence, read N- to C-terminus: uncharacterized protein (396 aa).

2 helical membrane-spanning segments follow: residues 27-47 (LLIA…QICL) and 69-89 (FIVL…NVTF). The HXXXXD motif signature appears at 117–122 (HQMYAD). The next 2 membrane-spanning stretches (helical) occupy residues 123 to 143 (WIYL…YIIL) and 372 to 392 (LTPR…VFVM).

The protein belongs to the 1-acyl-sn-glycerol-3-phosphate acyltransferase family.

Its subcellular location is the membrane. This is an uncharacterized protein from Saccharomyces cerevisiae (strain ATCC 204508 / S288c) (Baker's yeast).